A 276-amino-acid polypeptide reads, in one-letter code: Syntaxin-12 (276 aa).

S2 carries the post-translational modification N-acetylserine. Residues S2–R248 lie on the Cytoplasmic side of the membrane. The stretch at I33–S131 forms a coiled coil. 4 positions are modified to phosphoserine: S139, S142, S218, and S225. The region spanning L178–A240 is the t-SNARE coiled-coil homology domain. Residues K249–I269 traverse the membrane as a helical; Anchor for type IV membrane protein segment. Over W270–K276 the chain is Vesicular.

Belongs to the syntaxin family. In terms of assembly, associates with the BLOC-1 complex. Interacts with BLOC1S6. Interacts with NAPA and SNAP23. Identified in a complex containing STX6, STX12, VAMP4 and VTI1A. Interacts with GRIPAP1. Forms a complex with GRIP1, GRIA2 and NSG1; controls the intracellular fate of AMPAR and the endosomal sorting of the GRIA2 subunit toward recycling and membrane targeting. Interacts with NSG1. Interacts with TPC1. Interacts (via N-terminus) with VPS13B.

The protein resides in the endosome membrane. It localises to the golgi apparatus membrane. It is found in the endomembrane system. The protein localises to the early endosome membrane. Its subcellular location is the recycling endosome membrane. SNARE promoting fusion of transport vesicles with target membranes. Together with SNARE STX6, promotes movement of vesicles from endosomes to the cell membrane, and may therefore function in the endocytic recycling pathway. Through complex formation with GRIP1, GRIA2 and NSG1 controls the intracellular fate of AMPAR and the endosomal sorting of the GRIA2 subunit toward recycling and membrane targeting. This Pongo abelii (Sumatran orangutan) protein is Syntaxin-12 (STX12).